The chain runs to 276 residues: NADPH-dependent 7-cyano-7-deazaguanine reductase (276 aa).

Residue 83–85 (VES) participates in substrate binding. 85 to 86 (SK) contributes to the NADPH binding site. C184 serves as the catalytic Thioimide intermediate. D191 serves as the catalytic Proton donor. 223-224 (HE) is a substrate binding site. An NADPH-binding site is contributed by 252-253 (RG).

Belongs to the GTP cyclohydrolase I family. QueF type 2 subfamily. Homodimer.

The protein localises to the cytoplasm. The enzyme catalyses 7-aminomethyl-7-carbaguanine + 2 NADP(+) = 7-cyano-7-deazaguanine + 2 NADPH + 3 H(+). It functions in the pathway tRNA modification; tRNA-queuosine biosynthesis. Its function is as follows. Catalyzes the NADPH-dependent reduction of 7-cyano-7-deazaguanine (preQ0) to 7-aminomethyl-7-deazaguanine (preQ1). In Azotobacter vinelandii (strain DJ / ATCC BAA-1303), this protein is NADPH-dependent 7-cyano-7-deazaguanine reductase.